A 318-amino-acid chain; its full sequence is L-lactate dehydrogenase (318 aa).

Residues V17, D38, K43, Y69, and 83 to 84 (GA) each bind NAD(+). Substrate is bound by residues Q86 and R92. Residues S105, 122-124 (ATN), and S147 each bind NAD(+). 124-127 (NPVD) is a binding site for substrate. 152-155 (DTAR) contributes to the substrate binding site. K157 and H172 together coordinate beta-D-fructose 1,6-bisphosphate. H179 acts as the Proton acceptor in catalysis. A Phosphotyrosine modification is found at Y223. T232 serves as a coordination point for substrate.

Belongs to the LDH/MDH superfamily. LDH family. In terms of assembly, homotetramer.

It is found in the cytoplasm. It catalyses the reaction (S)-lactate + NAD(+) = pyruvate + NADH + H(+). It functions in the pathway fermentation; pyruvate fermentation to lactate; (S)-lactate from pyruvate: step 1/1. With respect to regulation, allosterically activated by fructose 1,6-bisphosphate (FBP). Functionally, catalyzes the conversion of lactate to pyruvate. This chain is L-lactate dehydrogenase, found in Staphylococcus saprophyticus subsp. saprophyticus (strain ATCC 15305 / DSM 20229 / NCIMB 8711 / NCTC 7292 / S-41).